Reading from the N-terminus, the 159-residue chain is MTTKAIYPGTFDPLTNGHLDLLTRASRLFDHVVLAIAASPSKQTLFTLDERVALAKGATEHLSNVDVIGFSDLMAHFAQQQNANILVRGLRAVADFEYELQLAKMNHHLMPTLESVFLMPSEEWSFISSSLVKEVARHGGDVSHFLPDAIVSALMEKLR.

A substrate-binding site is contributed by Thr10. Residues 10-11 (TF) and His18 each bind ATP. Residues Lys42, Met74, and Arg88 each contribute to the substrate site. Residues 89–91 (GLR), Glu99, and 124–130 (WSFISSS) contribute to the ATP site.

The protein belongs to the bacterial CoaD family. As to quaternary structure, homohexamer. The cofactor is Mg(2+).

The protein resides in the cytoplasm. The catalysed reaction is (R)-4'-phosphopantetheine + ATP + H(+) = 3'-dephospho-CoA + diphosphate. Its pathway is cofactor biosynthesis; coenzyme A biosynthesis; CoA from (R)-pantothenate: step 4/5. Reversibly transfers an adenylyl group from ATP to 4'-phosphopantetheine, yielding dephospho-CoA (dPCoA) and pyrophosphate. The polypeptide is Phosphopantetheine adenylyltransferase (Pectobacterium carotovorum subsp. carotovorum (strain PC1)).